Consider the following 183-residue polypeptide: Small ribosomal subunit protein eS10z (183 aa).

A disordered region spans residues 91–183 (LKKSARPPGR…GAGPTSSSME (93 aa)). The segment covering 109-130 (DRPRGPPRFEGDRPRFGDRDGY) has biased composition (basic and acidic residues). 2 stretches are compositionally biased toward gly residues: residues 131–146 (RGGP…GEKG) and 161–175 (GRPG…GFGA).

The protein belongs to the eukaryotic ribosomal protein eS10 family.

The protein localises to the cytoplasm. This chain is Small ribosomal subunit protein eS10z, found in Oryza sativa subsp. japonica (Rice).